A 352-amino-acid polypeptide reads, in one-letter code: Ion-translocating oxidoreductase complex subunit D (352 aa).

The next 5 membrane-spanning stretches (helical) occupy residues 20 to 40 (IMLLVLLAAIPGIATQLWFFG), 42 to 62 (GTLVQIILAVISALSAEALVL), 68 to 88 (PIAAILKDNSALLTGLLLAVS), 89 to 109 (IPPLAPWWMVVLGTVFAVIIA), and 123 to 143 (PAMIGYVVLLISFPVQMTNWL). The residue at position 187 (threonine 187) is an FMN phosphoryl threonine. 5 helical membrane passes run 217–237 (GAGWQWVNLAWLAGGVWLLAI), 244–264 (IPVSFLVSLALCATLGWLFAP), 267–287 (LASPQIHMLSGATMLGAFFIL), 301–321 (LIFGALAGVLVWLIRSFGGYP), and 322–342 (DGVAFAVLLANITVPLIDYYT).

Belongs to the NqrB/RnfD family. As to quaternary structure, the complex is composed of six subunits: RsxA, RsxB, RsxC, RsxD, RsxE and RsxG. FMN is required as a cofactor.

The protein localises to the cell inner membrane. In terms of biological role, part of a membrane-bound complex that couples electron transfer with translocation of ions across the membrane. Required to maintain the reduced state of SoxR. The polypeptide is Ion-translocating oxidoreductase complex subunit D (Escherichia fergusonii (strain ATCC 35469 / DSM 13698 / CCUG 18766 / IAM 14443 / JCM 21226 / LMG 7866 / NBRC 102419 / NCTC 12128 / CDC 0568-73)).